The primary structure comprises 336 residues: Probable deoxyhypusine synthase (336 aa).

The active-site Nucleophile is Lys308.

The protein belongs to the deoxyhypusine synthase family. The cofactor is NAD(+).

The catalysed reaction is [eIF5A protein]-L-lysine + spermidine = [eIF5A protein]-deoxyhypusine + propane-1,3-diamine. It participates in protein modification; eIF5A hypusination. In terms of biological role, catalyzes the NAD-dependent oxidative cleavage of spermidine and the subsequent transfer of the butylamine moiety of spermidine to the epsilon-amino group of a specific lysine residue of the eIF-5A precursor protein to form the intermediate deoxyhypusine residue. The protein is Probable deoxyhypusine synthase of Pyrococcus furiosus (strain ATCC 43587 / DSM 3638 / JCM 8422 / Vc1).